The following is a 149-amino-acid chain: MAEQLTEEQIAEFKEAFSLFDKDGDGCITTKELGTVMRSLGQNPTEAELQDMISEVDADQNGTIDFPEFLNLMARKMKDTDSEEELKEAFKVFDKDQNGFISAAELRHVMTNLGEKLTDEEVDEMIREADIDGDGQVNYEEFVRMMLAK.

The residue at position 2 (alanine 2) is an N-acetylalanine. EF-hand domains follow at residues 8–43 (EQIAEFKEAFSLFDKDGDGCITTKELGTVMRSLGQN), 44–79 (PTEAELQDMISEVDADQNGTIDFPEFLNLMARKMKD), 81–116 (DSEEELKEAFKVFDKDQNGFISAAELRHVMTNLGEK), and 117–149 (LTDEEVDEMIREADIDGDGQVNYEEFVRMMLAK). Residues aspartate 21, aspartate 23, aspartate 25, cysteine 27, glutamate 32, aspartate 57, aspartate 59, asparagine 61, threonine 63, glutamate 68, aspartate 94, aspartate 96, asparagine 98, and glutamate 105 each contribute to the Ca(2+) site. Lysine 116 bears the N6,N6,N6-trimethyllysine mark. Aspartate 130, aspartate 132, aspartate 134, glutamine 136, and glutamate 141 together coordinate Ca(2+).

The protein belongs to the calmodulin family.

Its function is as follows. Calmodulin mediates the control of a large number of enzymes, ion channels and other proteins by Ca(2+). Among the enzymes to be stimulated by the calmodulin-Ca(2+) complex are a number of protein kinases and phosphatases. In Solanum lycopersicum (Tomato), this protein is Calmodulin (CALM1).